Consider the following 275-residue polypeptide: Nitrogenase iron protein 1 (275 aa).

Residue 9–16 (GKGGIGKS) coordinates ATP. Cys-97 serves as a coordination point for [4Fe-4S] cluster. Position 100 is an ADP-ribosylarginine; by dinitrogenase reductase ADP-ribosyltransferase (Arg-100). Cys-132 lines the [4Fe-4S] cluster pocket.

The protein belongs to the NifH/BchL/ChlL family. Homodimer. The cofactor is [4Fe-4S] cluster. Post-translationally, the reversible ADP-ribosylation of Arg-100 inactivates the nitrogenase reductase and regulates nitrogenase activity.

The catalysed reaction is N2 + 8 reduced [2Fe-2S]-[ferredoxin] + 16 ATP + 16 H2O = H2 + 8 oxidized [2Fe-2S]-[ferredoxin] + 2 NH4(+) + 16 ADP + 16 phosphate + 6 H(+). Functionally, the key enzymatic reactions in nitrogen fixation are catalyzed by the nitrogenase complex, which has 2 components: the iron protein and the molybdenum-iron protein. The protein is Nitrogenase iron protein 1 (nifH1) of Methanosarcina barkeri.